The primary structure comprises 175 residues: Deoxyuridine 5'-triphosphate nucleotidohydrolase (175 aa).

Substrate-binding positions include 67-69 (RSG), Asn80, 84-86 (TVD), and Lys94. The disordered stretch occupies residues 138–175 (RAEGGFGSTGGHAAVGADTNGQQGGNRYASVVSDRKGQ).

Belongs to the dUTPase family. Mg(2+) serves as cofactor.

The enzyme catalyses dUTP + H2O = dUMP + diphosphate + H(+). Its pathway is pyrimidine metabolism; dUMP biosynthesis; dUMP from dCTP (dUTP route): step 2/2. This enzyme is involved in nucleotide metabolism: it produces dUMP, the immediate precursor of thymidine nucleotides and it decreases the intracellular concentration of dUTP so that uracil cannot be incorporated into DNA. In Streptomyces avermitilis (strain ATCC 31267 / DSM 46492 / JCM 5070 / NBRC 14893 / NCIMB 12804 / NRRL 8165 / MA-4680), this protein is Deoxyuridine 5'-triphosphate nucleotidohydrolase.